A 783-amino-acid chain; its full sequence is Polyribonucleotide nucleotidyltransferase 1, mitochondrial (783 aa).

The N-terminal 45 residues, 1–45, are a transit peptide targeting the mitochondrion; the sequence is MAACRLCCLCPCLRPLGCGPLGRPGRNRALSYLQMRALWSSTGSR. N6-acetyllysine is present on residues K250, K264, and K285. K552 is subject to N6-succinyllysine. Positions 605–664 constitute a KH domain; that stretch reads PVVETVKVPLSKRAKFVGPGGYHLKKLQAETGVTISQVDEETFSIFAPTPTAMHEARDFI. The 72-residue stretch at 679-750 folds into the S1 motif domain; that stretch reads GAVYTATITE…ADGRMRLSRK (72 aa). S754 carries the post-translational modification Phosphoserine.

The protein belongs to the polyribonucleotide nucleotidyltransferase family. In terms of assembly, homotrimer; in free form. Homooligomer. Component of the mitochondrial degradosome (mtEXO) complex which is a heteropentamer containing 2 copies of SUPV3L1 and 3 copies of PNPT1. As part of the mitochondrial degradosome complex, interacts with GRSF1 in an RNA-dependent manner; the interaction enhances the activity of the complex. Interacts with TCL1A; the interaction has no effect on PNPT1 exonuclease activity.

The protein localises to the cytoplasm. Its subcellular location is the mitochondrion matrix. The protein resides in the mitochondrion intermembrane space. It catalyses the reaction RNA(n+1) + phosphate = RNA(n) + a ribonucleoside 5'-diphosphate. Its function is as follows. RNA-binding protein implicated in numerous RNA metabolic processes. Catalyzes the phosphorolysis of single-stranded polyribonucleotides processively in the 3'-to-5' direction. Mitochondrial intermembrane factor with RNA-processing exoribonulease activity. Component of the mitochondrial degradosome (mtEXO) complex, that degrades 3' overhang double-stranded RNA with a 3'-to-5' directionality in an ATP-dependent manner. Involved in the degradation of non-coding mitochondrial transcripts (MT-ncRNA) and tRNA-like molecules. Required for correct processing and polyadenylation of mitochondrial mRNAs. Plays a role as a cytoplasmic RNA import factor that mediates the translocation of small RNA components, like the 5S RNA, the RNA subunit of ribonuclease P and the mitochondrial RNA-processing (MRP) RNA, into the mitochondrial matrix. Plays a role in mitochondrial morphogenesis and respiration; regulates the expression of the electron transport chain (ETC) components at the mRNA and protein levels. In the cytoplasm, shows a 3'-to-5' exoribonuclease mediating mRNA degradation activity; degrades c-myc mRNA upon treatment with IFNB1/IFN-beta, resulting in a growth arrest in melanoma cells. Regulates the stability of specific mature miRNAs in melanoma cells; specifically and selectively degrades miR-221, preferentially. Also plays a role in RNA cell surveillance by cleaning up oxidized RNAs. Binds to the RNA subunit of ribonuclease P, MRP RNA and miR-221 microRNA. This chain is Polyribonucleotide nucleotidyltransferase 1, mitochondrial (Pnpt1), found in Mus musculus (Mouse).